Here is a 295-residue protein sequence, read N- to C-terminus: Iodotyrosine deiodinase (295 aa).

Residues 3 to 23 (VFSSLTPVFVAVLCVIIGFLF) traverse the membrane as a helical segment. A disordered region spans residues 29 to 81 (KESRSKQKPSDQTARPWVDEDLQDDTEISTKDNEENNEDWMDTTDEENLPHVP). Residues 63 to 75 (ENNEDWMDTTDEE) show a composition bias toward acidic residues. FMN is bound by residues 106–110 (RRSVR), serine 134, and 134–135 (SG). Positions 136, 163, 167, and 188 each coordinate 3-iodo-L-tyrosine. FMN-binding positions include 243–245 (TTT) and arginine 285.

This sequence belongs to the nitroreductase family. Requires FMN as cofactor.

It localises to the membrane. It catalyses the reaction 2 iodide + L-tyrosine + 2 NADP(+) = 3,5-diiodo-L-tyrosine + 2 NADPH + H(+). The enzyme catalyses iodide + L-tyrosine + NADP(+) = 3-iodo-L-tyrosine + NADPH. It carries out the reaction 3-iodo-L-tyrosine + iodide + NADP(+) = 3,5-diiodo-L-tyrosine + NADPH + H(+). The catalysed reaction is L-tyrosine + chloride + NADP(+) = 3-chloro-L-tyrosine + NADPH. It catalyses the reaction bromide + L-tyrosine + NADP(+) = 3-bromo-L-tyrosine + NADPH. In terms of biological role, catalyzes the dehalogenation of halotyrosines such as 3,5-diiodo-L-tyrosine. Likely to also catalyze the dehalogenation of other halotyrosines such as 3-bromo-L-tyrosine, 3-chloro-L-tyrosine and 3-iodo-L-tyrosine. The protein is Iodotyrosine deiodinase (iyd) of Danio rerio (Zebrafish).